Here is a 539-residue protein sequence, read N- to C-terminus: Chaperonin GroEL 1 (539 aa).

Residues 29 to 32 (TLGP), 86 to 90 (DGTTT), Gly-413, 478 to 480 (NAA), and Asp-494 contribute to the ATP site. Residues 520-539 (IVDKPAEPEDDGHGHHGHAH) are disordered. The segment covering 523-533 (KPAEPEDDGHG) has biased composition (basic and acidic residues).

Belongs to the chaperonin (HSP60) family. In terms of assembly, forms a cylinder of 14 subunits composed of two heptameric rings stacked back-to-back. Interacts with the co-chaperonin GroES.

The protein localises to the cytoplasm. It carries out the reaction ATP + H2O + a folded polypeptide = ADP + phosphate + an unfolded polypeptide.. Its function is as follows. Together with its co-chaperonin GroES, plays an essential role in assisting protein folding. The GroEL-GroES system forms a nano-cage that allows encapsulation of the non-native substrate proteins and provides a physical environment optimized to promote and accelerate protein folding. The sequence is that of Chaperonin GroEL 1 from Mycobacterium ulcerans (strain Agy99).